Consider the following 662-residue polypeptide: Transcription activator of gluconeogenesis NECHADRAFT_59099 (662 aa).

The disordered stretch occupies residues 1 to 61 (MPHEMEENGA…KDPLRPRRKK (61 aa)). Basic and acidic residues-rich tracts occupy residues 25-34 (TFLKDDEKMT) and 43-56 (TEVK…DPLR). The zn(2)-C6 fungal-type DNA-binding region spans 66–94 (CFACQRAHLTCGDERPCQRCIKRGLADAC). Disordered regions lie at residues 105 to 149 (LHDA…TGSN), 502 to 524 (YSGR…MTTP), and 580 to 606 (YRAP…SSRV). 2 stretches are compositionally biased toward polar residues: residues 121–130 (YNPTPTPSRT) and 137–149 (SSQS…TGSN). The PAS domain maps to 448-519 (TLVEYDDFLQ…TNTPDHNSQG (72 aa)). A compositionally biased stretch (basic and acidic residues) spans 582-593 (APQDPDQKEPGS).

It belongs to the ERT1/acuK family.

The protein resides in the nucleus. Functionally, transcription factor which regulates nonfermentable carbon utilization. Activator of gluconeogenetic genes. The protein is Transcription activator of gluconeogenesis NECHADRAFT_59099 of Fusarium vanettenii (strain ATCC MYA-4622 / CBS 123669 / FGSC 9596 / NRRL 45880 / 77-13-4) (Fusarium solani subsp. pisi).